Consider the following 556-residue polypeptide: Vetispiradiene synthase 1 (556 aa).

Mg(2+) contacts are provided by aspartate 309, aspartate 313, aspartate 452, threonine 456, and glutamate 460. Residues 309–313 (DDTFD) carry the DDXXD motif motif.

It belongs to the terpene synthase family. Tpsa subfamily. Mg(2+) is required as a cofactor.

The protein resides in the cytoplasm. The catalysed reaction is (2E,6E)-farnesyl diphosphate = (-)-vetispiradiene + diphosphate. Its pathway is secondary metabolite biosynthesis; terpenoid biosynthesis. Its function is as follows. Sesquiterpene synthase that catalyzes the formation of vetispiradiene from trans,trans-farnesyl diphosphate. The initial internal cyclization produces the monocyclic intermediate germacrene A. In Solanum tuberosum (Potato), this protein is Vetispiradiene synthase 1 (PVS1).